We begin with the raw amino-acid sequence, 366 residues long: D-alanine--D-alanine ligase A (366 aa).

One can recognise an ATP-grasp domain in the interval 145–348 (KRLLRDAGLK…YRELITALIE (204 aa)). ATP is bound at residue 175 to 230 (VEQLGLPLFVKPANQGSSVGVSKVKREADLRAALDEAFRYDHKVLVEQAVIGREIE). Residues Asp302, Glu315, and Asn317 each coordinate Mg(2+).

It belongs to the D-alanine--D-alanine ligase family. Mg(2+) serves as cofactor. The cofactor is Mn(2+).

It is found in the cytoplasm. It carries out the reaction 2 D-alanine + ATP = D-alanyl-D-alanine + ADP + phosphate + H(+). Its pathway is cell wall biogenesis; peptidoglycan biosynthesis. In terms of biological role, cell wall formation. The chain is D-alanine--D-alanine ligase A from Chromobacterium violaceum (strain ATCC 12472 / DSM 30191 / JCM 1249 / CCUG 213 / NBRC 12614 / NCIMB 9131 / NCTC 9757 / MK).